The sequence spans 676 residues: WD repeat-containing protein 48 (676 aa).

Phosphotyrosine is present on Tyr-28. WD repeat units lie at residues 28-67 (YNRN…QDPY), 73-112 (HHTD…CMST), 115-154 (THKD…ALTA), 166-205 (GNKD…KLMK), 208-247 (GHTD…CIAT), 250-289 (VHDE…IRVL), 292-334 (EEKA…NFRA), and 358-397 (KGGA…KVED). Lys-214 bears the N6-acetyllysine mark. The residue at position 578 (Lys-578) is an N6-acetyllysine. Positions 607-628 (LDNESQTTSSSNNEKPEQEKEE) are disordered. Low complexity predominate over residues 609–619 (NESQTTSSSNN). Position 613 is a phosphothreonine (Thr-613).

Belongs to the WD repeat WDR48 family. As to quaternary structure, interacts with USP46. Interacts with USP1. Interacts with USP12. Component of the USP12-WDR20-WDR48 deubiquitinating complex. Component of the USP12-DMWD-WDR48 deubiquitinating complex. Interacts with PHLPP1. Interacts with RAD51AP1; the interaction is direct and promotes formation of a trimeric complex with RAD51 via RAD51AP1. Interacts with ATAD5; the interaction regulates USP1-mediated PCNA deubiquitination. Interacts with RAD51; the interaction is enhanced under replication stress. Interacts with ITCH; the interaction is more efficient when both USP12 and WDR48/UAF1 are involved and may facilitate recruitment of the USP12 deubiquitinating complex to Notch.

It localises to the nucleus. The protein localises to the cytoplasm. It is found in the lysosome. The protein resides in the late endosome. Regulator of deubiquitinating complexes, which acts as a strong activator of USP1, USP12 and USP46. Enhances the USP1-mediated deubiquitination of FANCD2; USP1 being almost inactive by itself. Activates deubiquitination by increasing the catalytic turnover without increasing the affinity of deubiquitinating enzymes for the substrate. Also activates deubiquitinating activity of complexes containing USP12. Docks at the distal end of the USP12 fingers domain and induces a cascade of structural changes leading to the activation of the enzyme. Together with RAD51AP1, promotes DNA repair by stimulating RAD51-mediated homologous recombination. Binds single-stranded DNA (ssDNA) and double-stranded DNA (dsDNA). DNA-binding is required both for USP1-mediated deubiquitination of FANCD2 and stimulation of RAD51-mediated homologous recombination: both WDR48/UAF1 and RAD51AP1 have coordinated role in DNA-binding during these processes. Together with ATAD5 and by regulating USP1 activity, has a role in PCNA-mediated translesion synthesis (TLS) by deubiquitinating monoubiquitinated PCNA. Together with ATAD5, has a role in recruiting RAD51 to stalled forks during replication stress. This is WD repeat-containing protein 48 (Wdr48) from Mus musculus (Mouse).